The following is a 529-amino-acid chain: Peptide chain release factor 3 (529 aa).

Residues 11-280 form the tr-type G domain; sequence SKRRTFAIIS…GLTDWAPAPL (270 aa). GTP-binding positions include 20–27, 88–92, and 142–145; these read SHPDAGKT, DTPGH, and NKLD.

The protein belongs to the TRAFAC class translation factor GTPase superfamily. Classic translation factor GTPase family. PrfC subfamily.

The protein localises to the cytoplasm. Increases the formation of ribosomal termination complexes and stimulates activities of RF-1 and RF-2. It binds guanine nucleotides and has strong preference for UGA stop codons. It may interact directly with the ribosome. The stimulation of RF-1 and RF-2 is significantly reduced by GTP and GDP, but not by GMP. This Vibrio vulnificus (strain CMCP6) protein is Peptide chain release factor 3.